The primary structure comprises 357 residues: Peptide chain release factor 1 (357 aa).

Position 236 is an N5-methylglutamine (glutamine 236).

It belongs to the prokaryotic/mitochondrial release factor family. Methylated by PrmC. Methylation increases the termination efficiency of RF1.

The protein localises to the cytoplasm. In terms of biological role, peptide chain release factor 1 directs the termination of translation in response to the peptide chain termination codons UAG and UAA. The polypeptide is Peptide chain release factor 1 (Mycolicibacterium gilvum (strain PYR-GCK) (Mycobacterium gilvum (strain PYR-GCK))).